A 1040-amino-acid chain; its full sequence is MGEEGGSVSHDEEERASVLLGQYLGCEMCSQEAFQAQRSQLVELLVSGSLEGFESVLDWLLSWEVLSWEDYEGFHLLGQPLSHLARRLLDTVWNKGTWACQKLIAAAQEAQADSQSPKLHGCWDPHSLHPARDLQSHRPAIVRRLHSHVEGVLDLAWERGFVSQYECDEIRLPIFTPSQRARRLLDLATVKANGLAAFLLQHVQELPVPLALPLEAATCRKYMAKLRTTVSAQSRFLSTYDGAETLCLEDIYTENVLEVWADVGTAGPPPKSPATLGLEELFSTPGHLNDDADTVLVVGEAGSGKSTLLQRLHLLWAAGRDFQEFLFVFPFSCRQLQCMAKPLSVRTLLFEHCCWPDVGQEDIFQLLLDHPDRVLLTFDGFDEFKFRFTDRERHCSPTDPTSVQTLLFNLLQGNLLKNARKVVTSRPAAVSAFLRKYIRTEFNLKGFSEQGIELYLRKRHREPGVADRLIRLLQATSALHGLCHLPVFSWMVSKCHQELLLQEGGSPKTTTDMYLLILQHFLLHAIPPDSASQGLGPSLLRGRLPTLLHLGRLALWGLGMCCYVFSAQQLQAAQVSPDDISLGFLVRAKGVVPGSTAPLEFLHITFQCFFAAFYLALSADVPPALLRHLFNCGRPGNSPVARLLPTLCIQGSEGKDSSVAALLQKAEPHNLQITAAFLAGLLSREHWGLLAECQTSEKALLRRQACARWCLARSLRKHFHSIPPAAPGEAKSMHAMPGFIWLIRSLYEMQEERLARKAARGLNVGHLKLTFCSVGPAECAALAFVLQHLRRPVALQLDYNSVGDIGVEQLLPCLGVCKALYLRDNNISDRGICKLIECALHCEQLQKLVLFNNKLTDGCAHSMAKLLACRQNFLALRLGNNHITPAGAQVLAEGLRGNTSLQFLGFWGNRVGDEGAQALAEALGDHQSLRWLSLVGNNIGSVGAQALALMLAKNVMLEELCLEENHIQDEGVCSLAEGLKKNSSLKILKLSNNCITYLGAKALLQALERNDTILEVWLRGNIFSLEEVDKLGCRDIRLLL.

2 CARD domains span residues Cys26–Cys122 and His126–Thr218. The short motif at Trp63–Leu77 is the ATG16L1-binding motif element. Residues Thr239, Tyr252, Thr253, Gly302, Ser303, Gly304, Lys305, Ser306, and Thr307 each contribute to the ADP site. The interval Asp241–Ala274 is required for CARD9 binding. Residues Asp293 to Ser618 form the NACHT domain. Gly299–Ser306 lines the ATP pocket. Cys395 carries the S-palmitoyl cysteine lipid modification. His603 contributes to the ADP binding site. 9 LRR repeats span residues Arg791 to Pro812, Val816 to Ala839, Gln844 to Lys865, Asn872 to Thr884, Ser900 to Ala920, Ser928 to Leu949, Met956 to Ala976, Ser984 to Gln1005, and Thr1012 to Gly1032. The S-palmitoyl cysteine moiety is linked to residue Cys1033.

The protein belongs to the NOD1-NOD2 family. In terms of assembly, homooligomer: homooligomerizes following muramyl dipeptide (MDP)-binding, promoting RIPK2 recruitment. Interacts (via CARD domain) with RIPK2 (via CARD domain). Following RIPK2 recruitment, RIPK2 homooligomerizes via its CARD domain and forms long filaments named RIPosomes. Interacts (via CARD domain) with ubiquitin; inhibiting interaction with RIPK2. Component of a signaling complex consisting of ARHGEF2, NOD2 and RIPK2. Interacts with ANKRD17 (via N-terminus). Interacts with HSPA1A; the interaction enhances NOD2 stability. Interacts (via both CARD domains) with HSP90; the interaction enhances NOD2 stability. Interacts (via CARD domain) with SOCS3; the interaction promotes NOD2 degradation. Interacts (via CARD domain) with ERBIN; the interaction inhibits activation of NOD2. Interacts with MAPKBP1; the interaction is enhanced in the presence of muramyl dipeptide (MDP) and inhibits NOD2 homooligomerization and activation. Interacts with INAVA; the interaction takes place upon Pattern recognition receptor (PRR) stimulation. Interacts (via NACHT domain) with CARD9. Interacts (via CARD domain) with CASP1; this interaction leads to IL1B processing. Also interacts with CASP4. Interacts with NLRP1; this interaction is enhanced in the presence of muramyl dipeptide (MDP) and leads to increased IL1B release. Interacts with NLRP12; this interaction promotes degradation of NOD2 through the ubiquitin-proteasome pathway. Interacts with ANKHD1, C10orf67, CHMP5, DOCK7, ENTR1, KRT15, LDOC1, PPP1R12C, PPP2R3B, TRIM41 and VIM. Interacts with MAVS; interaction takes place following single-stranded RNA (ssRNA)-binding. Interacts with ATG16L1. Interacts with IRGM; promoting IRGM 'Lys-63'-linked polyubiquitination, which is required for interactions with the core autophagy factors. Post-translationally, palmitoylated by ZDHHC5; palmitoylation is required for proper recruitment to the bacterial entry site and hence for proper signaling upon cognate peptidoglycan detection. Palmitoylation promotes localization to the cell membrane. Palmitoylation protects from SQSTM1/p62-dependent autophagic degradation. Polyubiquitinated by TRIM27, leading to proteasome-mediated degradation. Polyubiquitinated and degraded following muramyl dipeptide (MDP) stimulation, conferring MDP tolerance and preventing septic shock. In terms of processing, degraded via selective autophagy following interaction with IRGM. IRGM promotes NOD2-RIPK2 RIPosome recruitment to autophagosome membranes, promoting their SQSTM1/p62-dependent autophagic degradation. Post-translationally, O-glycosylated by OGT, O-GlcNAcylation increases protein stability.

The protein localises to the cell membrane. The protein resides in the basolateral cell membrane. It is found in the cytoplasm. It localises to the mitochondrion. ADP-binding promotes an inactive closed conformation. Its function is as follows. Pattern recognition receptor (PRR) that detects bacterial peptidoglycan fragments and other danger signals and plays an important role in gastrointestinal immunity. Specifically activated by muramyl dipeptide (MDP), a fragment of bacterial peptidoglycan found in every bacterial peptidoglycan type. NOD2 specifically recognizes and binds 6-O-phospho-MDP, the phosphorylated form of MDP, which is generated by NAGK. 6-O-phospho-MDP-binding triggers oligomerization that facilitates the binding and subsequent activation of the proximal adapter receptor-interacting RIPK2. Following recruitment, RIPK2 undergoes 'Met-1'- (linear) and 'Lys-63'-linked polyubiquitination by E3 ubiquitin-protein ligases XIAP, BIRC2, BIRC3 and the LUBAC complex, becoming a scaffolding protein for downstream effectors, triggering activation of the NF-kappa-B and MAP kinases signaling. This in turn leads to the transcriptional activation of hundreds of genes involved in immune response. Its ability to detect bacterial MDP plays a central role in maintaining the equilibrium between intestinal microbiota and host immune responses to control inflammation. An imbalance in this relationship results in dysbiosis, whereby pathogenic bacteria prevail on commensals, causing damage in the intestinal epithelial barrier as well as allowing bacterial invasion and inflammation. Acts as a regulator of appetite by sensing MDP in a subset of brain neurons: microbiota-derived MDP reach the brain, where they bind and activate NOD2 in inhibitory hypothalamic neurons, decreasing neuronal activity, thereby regulating satiety and body temperature. NOD2-dependent MDP-sensing of bacterial cell walls in the intestinal epithelial compartment contributes to sustained postnatal growth upon undernutrition. Also plays a role in antiviral response by acting as a sensor of single-stranded RNA (ssRNA) from viruses: upon ssRNA-binding, interacts with MAVS, leading to activation of interferon regulatory factor-3/IRF3 and expression of type I interferon. Also acts as a regulator of autophagy in dendritic cells via its interaction with ATG16L1, possibly by recruiting ATG16L1 at the site of bacterial entry. NOD2 activation in the small intestine crypt also contributes to intestinal stem cells survival and function: acts by promoting mitophagy via its association with ATG16L1. In addition to its main role in innate immunity, also regulates the adaptive immune system by acting as regulator of helper T-cell and regulatory T-cells (Tregs). Besides recognizing pathogens, also involved in the endoplasmic reticulum stress response: acts by sensing and binding to the cytosolic metabolite sphingosine-1-phosphate generated in response to endoplasmic reticulum stress, initiating an inflammation process that leads to activation of the NF-kappa-B and MAP kinases signaling. May also be involved in NLRP1 activation following activation by MDP, leading to CASP1 activation and IL1B release in macrophages. This Hylobates lar (Lar gibbon) protein is Nucleotide-binding oligomerization domain-containing protein 2 (NOD2).